A 274-amino-acid chain; its full sequence is Diaminopimelate epimerase (274 aa).

Substrate contacts are provided by Asn11, Gln44, and Asn64. Residue Cys73 is the Proton donor of the active site. Substrate is bound by residues 74–75 (GN), Asn157, Asn190, and 208–209 (ER). The active-site Proton acceptor is Cys217. 218–219 (GS) is a binding site for substrate.

It belongs to the diaminopimelate epimerase family. In terms of assembly, homodimer.

Its subcellular location is the cytoplasm. It carries out the reaction (2S,6S)-2,6-diaminopimelate = meso-2,6-diaminopimelate. It participates in amino-acid biosynthesis; L-lysine biosynthesis via DAP pathway; DL-2,6-diaminopimelate from LL-2,6-diaminopimelate: step 1/1. Catalyzes the stereoinversion of LL-2,6-diaminopimelate (L,L-DAP) to meso-diaminopimelate (meso-DAP), a precursor of L-lysine and an essential component of the bacterial peptidoglycan. The polypeptide is Diaminopimelate epimerase (Escherichia coli O6:H1 (strain CFT073 / ATCC 700928 / UPEC)).